A 633-amino-acid chain; its full sequence is Acetylcholinesterase (633 aa).

The N-terminal stretch at 1 to 23 (MKILDALLFPVIFIMFFIHLSIA) is a signal peptide. A disulfide bond links C91 and C118. N133 and N184 each carry an N-linked (GlcNAc...) asparagine glycan. The active-site Acyl-ester intermediate is S225. A disulfide bond links C279 and C290. N-linked (GlcNAc...) asparagine glycosylation occurs at N283. Catalysis depends on E352, which acts as the Charge relay system. An N-linked (GlcNAc...) asparagine glycan is attached at N368. C427 and C579 are disulfide-bonded. The active-site Charge relay system is the H494. 2 N-linked (GlcNAc...) asparagine glycosylation sites follow: N511 and N591.

Belongs to the type-B carboxylesterase/lipase family.

It is found in the synapse. Its subcellular location is the secreted. The protein resides in the cell membrane. It carries out the reaction acetylcholine + H2O = choline + acetate + H(+). Its function is as follows. Terminates signal transduction at the neuromuscular junction by rapid hydrolysis of the acetylcholine released into the synaptic cleft. The polypeptide is Acetylcholinesterase (ache) (Electrophorus electricus (Electric eel)).